The following is a 241-amino-acid chain: Sugar fermentation stimulation protein homolog (241 aa).

The protein belongs to the SfsA family.

In Nostoc punctiforme (strain ATCC 29133 / PCC 73102), this protein is Sugar fermentation stimulation protein homolog.